The chain runs to 277 residues: Undecaprenyl-diphosphatase (277 aa).

Transmembrane regions (helical) follow at residues 44-64 (RAMAFNIIIQLAAILAVVWEF), 86-106 (GNLLLAFMPAVVLGVLFADLI), 110-130 (LFNPVTVAAALVVGGVIMLWA), 184-204 (AATEFSFFLAMPTMVGAAVYS), 215-235 (GDLPVFALGFVTSFIFAMIAV), and 250-270 (FAWYRIVFGLFILATWQFGWV).

The protein belongs to the UppP family.

It is found in the cell inner membrane. It catalyses the reaction di-trans,octa-cis-undecaprenyl diphosphate + H2O = di-trans,octa-cis-undecaprenyl phosphate + phosphate + H(+). Its function is as follows. Catalyzes the dephosphorylation of undecaprenyl diphosphate (UPP). Confers resistance to bacitracin. This Pseudomonas putida (strain ATCC 47054 / DSM 6125 / CFBP 8728 / NCIMB 11950 / KT2440) protein is Undecaprenyl-diphosphatase.